Here is a 482-residue protein sequence, read N- to C-terminus: Histone deacetylase 1 (482 aa).

A histone deacetylase region spans residues 9–321 (RKVCYYYDGD…WTYETAVALD (313 aa)). The 1D-myo-inositol 1,4,5,6-tetrakisphosphate site is built by Gly-27 and Lys-31. The residue at position 74 (Lys-74) is an N6-acetyllysine; alternate. A Glycyl lysine isopeptide (Lys-Gly) (interchain with G-Cter in SUMO2); alternate cross-link involves residue Lys-74. Residue His-141 is part of the active site. Zn(2+)-binding residues include Asp-176 and His-178. N6-acetyllysine is present on Lys-220. The residue at position 261 (Cys-261) is an S-nitrosocysteine. Zn(2+) is bound at residue Asp-264. Arg-270 contacts 1D-myo-inositol 1,4,5,6-tetrakisphosphate. Position 273 is an S-nitrosocysteine (Cys-273). Positions 390 to 400 (PEESGDEDEED) are enriched in acidic residues. The disordered stretch occupies residues 390–482 (PEESGDEDEE…KGVKEEVKLA (93 aa)). 5 positions are modified to phosphoserine: Ser-393, Ser-406, Ser-409, Ser-421, and Ser-423. Over residues 401-416 (PDKRISICSSDKRIAC) the composition is skewed to basic and acidic residues. The span at 417–427 (EEEFSDSDEEG) shows a compositional bias: acidic residues. Lys-432 carries the N6-methylated lysine; by EHMT2 modification. Lys-438 is covalently cross-linked (Glycyl lysine isopeptide (Lys-Gly) (interchain with G-Cter in SUMO2)). The segment covering 443-482 (VKTEDEKEKDPEEKKEVTEEEKTKEEKQEAKGVKEEVKLA) has biased composition (basic and acidic residues). A Glycyl lysine isopeptide (Lys-Gly) (interchain with G-Cter in SUMO2); alternate cross-link involves residue Lys-444. Lys-444 is covalently cross-linked (Glycyl lysine isopeptide (Lys-Gly) (interchain with G-Cter in SUMO); alternate). Residues Lys-456, Lys-457, and Lys-473 each participate in a glycyl lysine isopeptide (Lys-Gly) (interchain with G-Cter in SUMO2) cross-link. A Glycyl lysine isopeptide (Lys-Gly) (interchain with G-Cter in SUMO2); alternate cross-link involves residue Lys-476. Lys-476 participates in a covalent cross-link: Glycyl lysine isopeptide (Lys-Gly) (interchain with G-Cter in SUMO); alternate. Residue Lys-480 forms a Glycyl lysine isopeptide (Lys-Gly) (interchain with G-Cter in SUMO2) linkage.

The protein belongs to the histone deacetylase family. HD type 1 subfamily. In terms of assembly, part of the core histone deacetylase (HDAC) complex composed of HDAC1, HDAC2, RBBP4 and RBBP7, the core complex associates with SIN3, SAP18 and SAP30 to form the SIN3 HDAC complex. Component of the nucleosome remodeling and deacetylase (NuRD) repressor complex, composed of core proteins MTA1, MTA2, MTA3, RBBP4, RBBP7, HDAC1, HDAC2, MBD2, MBD3, and peripherally associated proteins CDK2AP1, CDK2AP2, GATAD2A, GATAD2B, CHD3, CHD4 and CHD5. The exact stoichiometry of the NuRD complex is unknown, and some subunits such as MBD2 and MBD3, GATAD2A and GATAD2B, and CHD3, CHD4 and CHD5 define mutually exclusive NuRD complexes. Component of a BHC histone deacetylase complex that contains HDAC1, HDAC2, HMG20B/BRAF35, KDM1A, RCOR1/CoREST and PHF21A/BHC80. The BHC complex may also contain ZMYM2, ZNF217, ZMYM3, GSE1 and GTF2I. Component of a mSin3A corepressor complex that contains SIN3A, SAP130, SUDS3/SAP45, ARID4B/SAP180, HDAC1 and HDAC2. Found in a trimeric complex with APBB1 and TSHZ3; the interaction between HDAC1 and APBB1 is mediated by TSHZ3. Forms a complex comprising APPL1, RUVBL2, APPL2, CTNNB1 and HDAC2. Component of a RCOR/GFI/KDM1A/HDAC complex. Part of a complex composed of TRIM28, HDAC1, HDAC2 and EHMT2. Part of a complex containing at least CDYL, MIER1, MIER2, HDAC1 and HDAC2. The large PER complex involved in the histone deacetylation is composed of at least HDAC1, PER2, SFPQ and SIN3A. Associates with the 9-1-1 complex; interacts with HUS1. Found in a complex with DNMT3A and HDAC7. Found in a complex with YY1, SIN3A and GON4L. Identified in a histone deacetylase complex that contains DNTTIP1, HDAC1 and MIDEAS; this complex assembles into a tetramer that contains four copies of each protein chain. Found in a complex composed of at least SINHCAF, SIN3A, HDAC1, SAP30, RBBP4, OGT and TET1. Component of the SIN3B complex, which includes SIN3B, HDAC1, PHF12 and MORF4L1. Interacts with GFI1; the interaction is direct. Interacts directly with GFI1B. Interacts with TSHZ3 (via N-terminus); the interaction is direct. Interacts with APEX1; the interaction is not dependent on the acetylated status of APEX1. Interacts with BANP. Interacts with BAZ2A/TIP5. Interacts with BCL6. Interacts with BCOR. Interacts with BHLHE40/DEC1. Interacts with BRCC3; this interaction is enhanced in the presence of PWWP2B. Interacts with BRMS1. Interacts with BRMS1L. Interacts with C10orf90/FATS (via its N-terminal); the interaction prevents binding of HDAC1 to CDKN1A/p21 and facilitates the acetylation and stabilization of CDKN1A/p21. Interacts with CBFA2T3. Interacts with CCAR2. Interacts with CDK2AP1. Interacts with CHD3. Interacts with CHD4. Interacts with CHFR. Interacts with CIART. Interacts with CDKN1A/p21. Interacts with CDK5 complexed to CDK5R1 (p25). Interacts with CRY1. Interacts with DAXX. Interacts with DDIT3/CHOP. Interacts with DDX5. Interacts with DHX36; this interaction occurs in a RNA-dependent manner. Interacts with DNMT1. Interacts with DNTTIP1. Interacts with E4F1. Interacts with EP300. Interacts with ERCC6. Interacts with GATAD2A. Interacts with HCFC1. Interacts with HDAC9. Interacts with HUS1. Interacts with INSM1. Interacts with KDM4A. Interacts with KDM5A; this interaction impairs histone deacetylation. Interacts with KDM5B. Interacts with KLF1. Interacts with MBD3L2. Interacts with MIER1. Interacts with NFE4. Interacts with NR4A2/NURR1. Interacts with NR1D2 (via C-terminus). Interacts with NRIP1. Interacts with NSD2. Interacts with PACS2. Interacts with PHB2. Interacts with PPHLN1. Interacts with PRDM6. Interacts with PRDM16. Interacts with PWWP2A in a MTA1-dependent manner. Interacts with PWWP2B. Interacts with RB1. Interacts with RERE. Interacts with SANBR (via the BTB domain). Interacts with SAMSN1. Interacts with SAP30L. Interacts with SETDB1. Interacts with SIN3A. Interacts with SMAD3. Interacts with SMAD4; positively regulated by ZBTB7A. Interacts with SMARCAD1. Interacts with SMARCA4/BRG1. Interacts with SMYD2. Interacts with SMYD4 (via MYND-type zinc finger). Interacts with SP1; the interaction deacetylates SP1 and regulates its transcriptional activity. Interacts with SP3; the interaction deacetylates SP3 and regulates its transcriptional activity. In vitro, C(18) ceramides increase this interaction and the subsequent SP3 deacetylation and SP3-mediated repression of the TERT promoter. Interacts with SPEN/MINT. Interacts with SPHK2. Interacts with SUV39H1. Interacts with TGIF. Interacts with TGIF2. Interacts with TRAF6. Interacts with TRIM28; the interaction recruits HDAC1 to E2F1 and inhibits its acetylation. Interacts with TSC22D3 isoform 1; this interaction affects HDAC1 activity on MYOG promoter and thus inhibits MYOD1 transcriptional activity. Interacts with UHRF1. Interacts with UHRF2. Interacts with ZBTB7A. Interacts with ZMYND8. Interacts with ZMYND15. Interacts with ZNF431. Interacts with ZNF516; this interaction is enhanced in the presence of PWWP2B. Interacts with ZNF541. Interacts with ZNF638. Interacts with ZNHIT1. Interacts with the non-histone region of MACROH2A1. Identified in a complex with HDAC2, KCTD19, DNTTIP1 and ZNF541. Interacts with MSX3. Interacts with VRK1. Zn(2+) is required as a cofactor. In terms of processing, sumoylated on Lys-444 and Lys-476; which promotes enzymatic activity. Desumoylated by SENP1. Post-translationally, phosphorylation on Ser-421 and Ser-423 promotes enzymatic activity and interactions with NuRD and SIN3 complexes. Phosphorylated by CDK5. Ubiquitinated by CHFR and KCTD11, leading to its degradation by the proteasome.

The protein resides in the nucleus. It carries out the reaction N(6)-acetyl-L-lysyl-[histone] + H2O = L-lysyl-[histone] + acetate. The catalysed reaction is N(6)-acetyl-L-lysyl-[protein] + H2O = L-lysyl-[protein] + acetate. It catalyses the reaction N(6)-(2E)-butenoyl-L-lysyl-[protein] + H2O = (2E)-2-butenoate + L-lysyl-[protein]. The enzyme catalyses N(6)-[(S)-lactoyl]-L-lysyl-[protein] + H2O = (S)-lactate + L-lysyl-[protein]. Its activity is regulated as follows. Inositol tetraphosphate (1D-myo-inositol 1,4,5,6-tetrakisphosphate) may act as an intermolecular glue between HDAC1 and N-Cor repressor complex components. In terms of biological role, histone deacetylase that catalyzes the deacetylation of lysine residues on the N-terminal part of the core histones (H2A, H2B, H3 and H4). Histone deacetylation gives a tag for epigenetic repression and plays an important role in transcriptional regulation, cell cycle progression and developmental events. Histone deacetylases act via the formation of large multiprotein complexes. Acts as a component of the histone deacetylase NuRD complex which participates in the remodeling of chromatin. As part of the SIN3B complex is recruited downstream of the constitutively active genes transcriptional start sites through interaction with histones and mitigates histone acetylation and RNA polymerase II progression within transcribed regions contributing to the regulation of transcription. Also functions as a deacetylase for non-histone targets, such as NR1D2, RELA, SP1, SP3, STAT3 and TSHZ3. Deacetylates SP proteins, SP1 and SP3, and regulates their function. Component of the BRG1-RB1-HDAC1 complex, which negatively regulates the CREST-mediated transcription in resting neurons. Upon calcium stimulation, HDAC1 is released from the complex and CREBBP is recruited, which facilitates transcriptional activation. Deacetylates TSHZ3 and regulates its transcriptional repressor activity. Deacetylates 'Lys-310' in RELA and thereby inhibits the transcriptional activity of NF-kappa-B. Deacetylates NR1D2 and abrogates the effect of KAT5-mediated relieving of NR1D2 transcription repression activity. Component of a RCOR/GFI/KDM1A/HDAC complex that suppresses, via histone deacetylase (HDAC) recruitment, a number of genes implicated in multilineage blood cell development. Involved in CIART-mediated transcriptional repression of the circadian transcriptional activator: CLOCK-BMAL1 heterodimer. Required for the transcriptional repression of circadian target genes, such as PER1, mediated by the large PER complex or CRY1 through histone deacetylation. In addition to protein deacetylase activity, also has protein-lysine deacylase activity: acts as a protein decrotonylase and delactylase by mediating decrotonylation ((2E)-butenoyl) and delactylation (lactoyl) of histones, respectively. This is Histone deacetylase 1 (HDAC1) from Bos taurus (Bovine).